The sequence spans 393 residues: UDP-glucose 6-dehydrogenase (393 aa).

Residues valine 11, aspartate 31, lysine 36, threonine 85, threonine 120, and glutamate 147 each coordinate NAD(+). Residues 143–147 (EFLRE), lysine 199, asparagine 203, 244–248 (YNNPS), and glycine 252 contribute to the substrate site. Tyrosine 254 provides a ligand contact to NAD(+). The active-site Nucleophile is cysteine 255. Lysine 258 is an NAD(+) binding site. Position 309 (lysine 309) interacts with substrate. Arginine 316 contacts NAD(+).

This sequence belongs to the UDP-glucose/GDP-mannose dehydrogenase family. Homodimer.

It catalyses the reaction UDP-alpha-D-glucose + 2 NAD(+) + H2O = UDP-alpha-D-glucuronate + 2 NADH + 3 H(+). It functions in the pathway nucleotide-sugar biosynthesis; UDP-alpha-D-glucuronate biosynthesis; UDP-alpha-D-glucuronate from UDP-alpha-D-glucose: step 1/1. It participates in capsule biogenesis; capsule polysaccharide biosynthesis. Catalyzes the formation of UDP-glucuronic acid which is required for capsular polysaccharide synthesis. Does not catalyze the formation of glucuronamide moiety of the capsular polysaccharide. The protein is UDP-glucose 6-dehydrogenase of Campylobacter jejuni subsp. jejuni serotype O:2 (strain ATCC 700819 / NCTC 11168).